A 354-amino-acid polypeptide reads, in one-letter code: Trans-3-hydroxy-L-proline dehydratase (354 aa).

Cys104 acts as the Proton acceptor in catalysis. Substrate contacts are provided by residues Gly105 to His106, Asp269, and Gly274 to Ser275.

The protein belongs to the proline racemase family. Homodimer. As to expression, ubiquitously expressed.

It carries out the reaction trans-3-hydroxy-L-proline = 1-pyrroline-2-carboxylate + H2O. Catalyzes the dehydration of trans-3-hydroxy-L-proline to Delta(1)-pyrroline-2-carboxylate (Pyr2C). May be required to degrade trans-3-hydroxy-L-proline from the diet and originating from the degradation of proteins such as collagen-IV that contain it. This Homo sapiens (Human) protein is Trans-3-hydroxy-L-proline dehydratase (L3HYPDH).